The sequence spans 150 residues: Putative flagella-related protein G (150 aa).

A helical membrane pass occupies residues 9-29; that stretch reads IILFVSVLIITAAVSGILATS.

This sequence belongs to the archaeal FlaG family.

Its subcellular location is the cell membrane. It is found in the archaeal flagellum. The chain is Putative flagella-related protein G (flaG) from Methanococcus voltae.